Here is a 200-residue protein sequence, read N- to C-terminus: Probable molybdenum cofactor guanylyltransferase (200 aa).

GTP is bound by residues 8-10, Lys-20, Asp-66, and Asp-97; that span reads LAG. Asp-97 lines the Mg(2+) pocket.

The protein belongs to the MobA family. The cofactor is Mg(2+).

It localises to the cytoplasm. It carries out the reaction Mo-molybdopterin + GTP + H(+) = Mo-molybdopterin guanine dinucleotide + diphosphate. In terms of biological role, transfers a GMP moiety from GTP to Mo-molybdopterin (Mo-MPT) cofactor (Moco or molybdenum cofactor) to form Mo-molybdopterin guanine dinucleotide (Mo-MGD) cofactor. This is Probable molybdenum cofactor guanylyltransferase from Bacillus velezensis (strain DSM 23117 / BGSC 10A6 / LMG 26770 / FZB42) (Bacillus amyloliquefaciens subsp. plantarum).